The chain runs to 447 residues: Multidrug efflux pump SdrM (447 aa).

14 consecutive transmembrane segments (helical) span residues 6–26 (IITV…SSII), 42–62 (LISL…PIVG), 70–90 (IIYV…MCGL), 94–114 (FTML…LMSL), 134–154 (IVGS…GGIL), 161–181 (WLFY…IWTF), 194–214 (FDTK…FALL), 217–237 (QLLL…MCLF), 260–280 (VFIT…YIPV), 286–306 (LGLS…AWIT), 323–342 (IYLL…SFGI), 346–363 (VLIA…GYIY), 392–412 (LGAS…SGIF), and 418–438 (NVLS…VVFF).

It belongs to the major facilitator superfamily.

The protein resides in the cell membrane. Functionally, energy-dependent drug efflux pump that increases resistance to antimicrobial agents such as norfloxacin, acriflavine and ethidium bromide. This chain is Multidrug efflux pump SdrM, found in Staphylococcus aureus (strain N315).